A 796-amino-acid chain; its full sequence is MLQYLKKIKGVSFMKTIKLPVVVTRGIFILPSTSKTIEFGRVKSKNALDASADLYNNQIVVVSQESPLEEEPNLEHLFYLGTVADLSVKKVWKDGTISVELNYNQKIKIDEFVEEDNIIYAIGSVFEDKLPKTDAQKTKIKEALEELQEKHSFNTSELLLVFNENDFNKLNSLIYQIIDKMPLVSLNTKLLLIQSTSILEKLELLKELIINRPKSTIKLNNNLNNNSTVDSEINKKLKDKMDKQQKEYYLREKMRIIKEELDDENSDASQLDKYKKRLEEEPFPESVKEKILSSIKRIETMQPGSAEVNVERNYVDWMMSIPWWEQSEDIDDLKYAQEILEKHHFGLKKVKERIIEYLAVKQKTKSLKGPIITFVGPPGVGKTSLARSIAEALGKKFVKVSLGGVKDESEIRGHRKTYVGSMPGRIIQALKRAKVKNPLFLLDEIDKMASDNRGDPASAMLEVLDPEQNKEFSDHYIEEPYDLSTVMFIATANYIENIPEALYDRMEIINLSSYTEIEKMHIAKDYLTKKILEEDQLTEDELRFTDEAYDEIIKYYTREAGVRQLERHLATIARKFIVKLLNGEITNLVVTREVVVQYLGKHIFEHTSKEEESQVGVVTGLAYTQFGGDILPIEVSTYNGKGNLTLTGKLGEVMKESATIALTYVKANHEKFGISKDKFDDIDIHIHVPEGAVPKDGPSAGITLTTALISALSKQPVSKDFGMTGEITLRGNVLPIGGLREKSISAARSGLKHILIPSKNVKDIEDVPQEVQDVLKITPVSKYEDVYEIIFKNNNQ.

One can recognise a Lon N-terminal domain in the interval 19–213; the sequence is LPVVVTRGIF…LLKELIINRP (195 aa). Position 376-383 (376-383) interacts with ATP; it reads GPPGVGKT. Residues 612–793 enclose the Lon proteolytic domain; it reads ESQVGVVTGL…EDVYEIIFKN (182 aa). Catalysis depends on residues S699 and K742.

It belongs to the peptidase S16 family. Homohexamer. Organized in a ring with a central cavity.

The protein resides in the cytoplasm. It catalyses the reaction Hydrolysis of proteins in presence of ATP.. ATP-dependent serine protease that mediates the selective degradation of mutant and abnormal proteins as well as certain short-lived regulatory proteins. Required for cellular homeostasis and for survival from DNA damage and developmental changes induced by stress. Degrades polypeptides processively to yield small peptide fragments that are 5 to 10 amino acids long. Binds to DNA in a double-stranded, site-specific manner. This Mycoplasma mycoides subsp. mycoides SC (strain CCUG 32753 / NCTC 10114 / PG1) protein is Lon protease.